The sequence spans 546 residues: MAWPKLPAPWLLLCTWLPAGCLSLLVTVQHTERYVTLFASIILKCDYTTSAQLQDVVVTWRFKSFCKDPIFDYYSASYQAALSLGQDPSNDCNDNQREVRIVAQRRGQNEPVLGVDYRQRKITIQNRADLVINEVMWWDHGVYYCTIEAPGDTSGDPDKEVKLIVLHWLTVIFIILGALLLLLLIGVCWCQCCPQYCCCYIRCPCCPAHCCCPEEALARHRYMKQAQALGPQMMGKPLYWGADRSSQVSSYPMHPLLQRDLSLPSSLPQMPMTQTTNQPPIANGVLEYLEKELRNLNLAQPLPPDLKGRFGHPCSMLSSLGSEVVERRIIHLPPLIRDLSSSRRTSDSLHQQWLTPIPSRPWDLREGRSHHHYPDFHQELQDRGPKSWALERRELDPSWSGRHRSSRLNGSPIHWSDRDSLSDVPSSSEARWRPSHPPFRSRCQERPRRPSPRESTQRHGRRRRHRSYSPPLPSGLSSWSSEEDKERQPQSWRAHRRGSHSPHWPEEKPPSYRSLDITPGKNSRKKGSVERRSEKDSSHSGRSVVI.

An N-terminal signal peptide occupies residues 1-23; the sequence is MAWPKLPAPWLLLCTWLPAGCLS. The Ig-like V-type domain maps to 24-162; it reads LLVTVQHTER…TSGDPDKEVK (139 aa). At 24 to 167 the chain is on the extracellular side; sequence LLVTVQHTER…DKEVKLIVLH (144 aa). C45 and C145 are disulfide-bonded. A helical transmembrane segment spans residues 168–188; it reads WLTVIFIILGALLLLLLIGVC. The Cytoplasmic segment spans residues 189 to 546; that stretch reads WCQCCPQYCC…SSHSGRSVVI (358 aa). Positions 399-546 are disordered; it reads WSGRHRSSRL…SSHSGRSVVI (148 aa). A compositionally biased stretch (basic and acidic residues) spans 442–457; it reads RCQERPRRPSPRESTQ. The segment covering 458–467 has biased composition (basic residues); sequence RHGRRRRHRS. 2 positions are modified to phosphoserine: S499 and S501. The segment covering 527–539 has biased composition (basic and acidic residues); it reads GSVERRSEKDSSH.

It belongs to the immunoglobulin superfamily. LISCH7 family. In terms of assembly, homooligomer. Interacts with MARVELD2 and OCLN; the interaction is required to recruit MARVELD2 to tricellular contacts. Interacts (via C-terminus) with TRA2A, TRA2B and SRSF1. Interacts with PLSCR1. In terms of tissue distribution, mainly expressed in prostate and to a lower extent in testis, pancreas, kidney, heart and liver.

It is found in the cell membrane. The protein resides in the cell junction. Its subcellular location is the tight junction. The protein localises to the cytoplasm. It localises to the cytosol. In terms of biological role, maintains epithelial barrier function by recruiting MARVELD2/tricellulin to tricellular tight junctions (tTJs). Crucial for normal hearing by maintaining the structural and functional integrity of tTJs, which are critical for the survival of auditory neurosensory HCs. Mediates fatty acids and lipoproteins-stimulated CCK/cholecystokinin secretion in the small intestine. In the inner ear, may regulate alternative pre-mRNA splicing via binding to TRA2A, TRA2B and SRSF1. Its function is as follows. (Microbial infection) Promotes influenza virus infection by inhibiting viral nucleoprotein NP binding to PLSCR1 and thereby PLSCR1-mediated antiviral activity. The polypeptide is Immunoglobulin-like domain-containing receptor 1 (Homo sapiens (Human)).